Here is a 294-residue protein sequence, read N- to C-terminus: MTQISGSLVAIVTPMHEDGSLDFPSLRSLIDWHIAEGTDGIVIVGTSGESPTVSVDEHRELIRVTVEQVNKRIPVIAGTGGNSTTEAVELTAYAKSVGADASLQVVPYYNKPTQEGMYLHFRKVAESVDLPVILYNVPGRTVADMSVDTMLRLAQVPGVMGVKEATGNIDRAAQLIKAAPASFKIYSGDDPTAVALMLLGGHGNISVTANVAPRAMHDLCAAAMRGDVETARRIHMQLLSVHKNLFVESNPIPVKWALQAMGKMAGGIRLPLTPLAAQYQEVVRASLQDAGLLS.

Residue serine 47 participates in pyruvate binding. Tyrosine 135 acts as the Proton donor/acceptor in catalysis. Lysine 163 (schiff-base intermediate with substrate) is an active-site residue. Isoleucine 205 contributes to the pyruvate binding site.

The protein belongs to the DapA family. In terms of assembly, homotetramer; dimer of dimers.

The protein resides in the cytoplasm. The enzyme catalyses L-aspartate 4-semialdehyde + pyruvate = (2S,4S)-4-hydroxy-2,3,4,5-tetrahydrodipicolinate + H2O + H(+). It participates in amino-acid biosynthesis; L-lysine biosynthesis via DAP pathway; (S)-tetrahydrodipicolinate from L-aspartate: step 3/4. Functionally, catalyzes the condensation of (S)-aspartate-beta-semialdehyde [(S)-ASA] and pyruvate to 4-hydroxy-tetrahydrodipicolinate (HTPA). This is 4-hydroxy-tetrahydrodipicolinate synthase from Ralstonia nicotianae (strain ATCC BAA-1114 / GMI1000) (Ralstonia solanacearum).